A 753-amino-acid polypeptide reads, in one-letter code: Dolichyl-phosphate-mannose--protein mannosyltransferase 3 (753 aa).

Topologically, residues 1–50 (MPYRVATGYSEKSTDDDLIWRTPIVKEELEDADNFLKDDAELYDKVKNES) are cytoplasmic. The helical transmembrane segment at 51-71 (AVSHLDTIVMPIIFTVLGMFT) threads the bilayer. At 72–148 (RMYKIGRNNH…IDYVKMRLFQ (77 aa)) the chain is on the lumenal side. An N-linked (GlcNAc...) asparagine glycan is attached at N124. Residues 149–169 (AMFSSLCVPLAYFTGRAIGFS) traverse the membrane as a helical segment. The Cytoplasmic segment spans residues 170-174 (RLSVW). A helical transmembrane segment spans residues 175–195 (LFTILVIFENSYATLGKFILL). Topologically, residues 196-235 (DSMLLFFTVSSYFCLAKFHTMRKSPFSARWWLWLCLTGLN) are lumenal. Residues 236–256 (LGCAISVKMVGLFIISVVGIY) form a helical membrane-spanning segment. Residues 257–282 (TISELWNLLSDRSVSWKVYVNHWLAR) are Cytoplasmic-facing. The helical transmembrane segment at 283–303 (IFGLIIIPVCVFLLCFKIHFD) threads the bilayer. At 304–602 (LLSNSGPGDS…IKYFLLGSPA (299 aa)) the chain is on the lumenal side. N324 is a glycosylation site (N-linked (GlcNAc...) asparagine). In terms of domain architecture, MIR 1 spans 332–387 (PRDVALGSSIISIKNQALGGALLHSHVQPFPEGSEQQQVTVYGYSDANNEWFFQRI). The N-linked (GlcNAc...) asparagine glycan is linked to N398. 2 consecutive MIR domains span residues 401-457 (IEFV…IEIV) and 465-523 (PTLL…IETH). A helical transmembrane segment spans residues 603–623 (SVWPSSIAVCALIIHVIFLTL). At 624–639 (KWQRQCVILSDPVERD) the chain is on the cytoplasmic side. A helical transmembrane segment spans residues 640–660 (VFVMAAFYPLLAWLLHYMPFV). Residues 661–665 (VMSRV) lie on the Lumenal side of the membrane. The chain crosses the membrane as a helical span at residues 666-686 (VYAHHYLPTLYFALMILSYYF). The Cytoplasmic portion of the chain corresponds to 687 to 703 (DMITKRWATRNTGKFLR). Residues 704–724 (LGAYIVYGSIVIAGFFYFSPF) traverse the membrane as a helical segment. The Lumenal segment spans residues 725-753 (SFGMDGPVDDYAYLAWLPTWQIVEDIRNT).

It belongs to the glycosyltransferase 39 family. As to quaternary structure, PMT3 and PMT5 form a functional heterodimer. Also forms a minor complex with PMT1.

The protein resides in the endoplasmic reticulum membrane. The enzyme catalyses a di-trans,poly-cis-dolichyl beta-D-mannosyl phosphate + L-seryl-[protein] = 3-O-(alpha-D-mannosyl)-L-seryl-[protein] + a di-trans,poly-cis-dolichyl phosphate + H(+). The catalysed reaction is a di-trans,poly-cis-dolichyl beta-D-mannosyl phosphate + L-threonyl-[protein] = 3-O-(alpha-D-mannosyl)-L-threonyl-[protein] + a di-trans,poly-cis-dolichyl phosphate + H(+). The protein operates within protein modification; protein glycosylation. Protein O-mannosyltransferase involved in O-glycosylation which is essential for cell wall rigidity. Forms a heterodimeric complex with PMT5 and more rarely with PMT1 to transfer mannose from Dol-P-mannose to Ser or Thr residues on proteins. Seems to have redundant activity to PMT2. The sequence is that of Dolichyl-phosphate-mannose--protein mannosyltransferase 3 from Saccharomyces cerevisiae (strain ATCC 204508 / S288c) (Baker's yeast).